The sequence spans 654 residues: MYLAILTLPLLSATVAGFLGRKIGKTGSHLITCSSLVLTALLALVAFYEVGLCGSPVSIKLMSWIDSEFLLVSWGFIYDSLTVSMLLPVLIVSALVHIYSTNYMSEDPHNQRFFAYLSMFTFFMLMLVTGDNYLVMFIGWEGVGISSYLLINFWFTRLQANKAAIKALVMNRVGDWGFSIGLWAIFWTFGNLDFTTVFSLAPFINEELITIISICLLVAAMGKSAQIGLHTWLPDAMEGPTPVSALIHAATMVTAGVYLLLRSSPILEFGSTALILITWVGALTAFFAATTGLLQNDLKRVIAYSTCSQLGLLFLVCGLSQYNVALFHLVNHAWFKALLFLSAGSVIHAMNDEQDLRKFGGLSRLLPFTYSMMVIGSLSLMALPFLTGFYSKDLIIELAYGHYSFSGNLVYWLASVAAVFTAMYSIRSLYLTFLGYPNGPKINYNNIHEAPLIMAIPLVVLAVFSIFFGYVTKDLFVGMGTDFYNNALFIHPNHSILVDTEFGLPMSMKFLPLIGSLLGTFGVLAIYWIFDELPNKFISTKLGRGIYRFFNQKYYFDNIYNNLLNKFLNFGYTTNKILDRGAIELVGPYGLVNVFKSASNKVSGLDSGFIPTYAMYIFNGLILFITLIFFIGDPRLFVLLLWAVFLLPNNTTQK.

Helical transmembrane passes span 1–21 (MYLA…FLGR), 30–50 (LITC…FYEV), 76–96 (FIYD…SALV), 113–133 (FFAY…GDNY), 135–155 (VMFI…NFWF), 178–198 (FSIG…TTVF), 200–220 (LAPF…LVAA), 241–261 (TPVS…YLLL), 274–294 (LILI…TGLL), 301–320 (VIAY…CGLS), 324–346 (VALF…AGSV), 365–385 (LLPF…ALPF), 406–426 (SGNL…MYSI), 451–471 (PLIM…FGYV), 510–530 (FLPL…YWIF), and 612–632 (TYAM…FFIG).

This sequence belongs to the complex I subunit 5 family.

Its subcellular location is the mitochondrion inner membrane. The catalysed reaction is a ubiquinone + NADH + 5 H(+)(in) = a ubiquinol + NAD(+) + 4 H(+)(out). In terms of biological role, core subunit of the mitochondrial membrane respiratory chain NADH dehydrogenase (Complex I) that is believed to belong to the minimal assembly required for catalysis. Complex I functions in the transfer of electrons from NADH to the respiratory chain. The immediate electron acceptor for the enzyme is believed to be ubiquinone. This chain is NADH-ubiquinone oxidoreductase chain 5 (ND5), found in Rhizopus stolonifer (Rhizopus nigricans).